A 150-amino-acid polypeptide reads, in one-letter code: AN1-type zinc finger protein TMC1 (150 aa).

The disordered stretch occupies residues 1-82; it reads MSDINEIEIP…TKKTTKKKKK (82 aa). The residue at position 2 (Ser2) is an N-acetylserine. Residues 23 to 33 show a composition bias toward basic and acidic residues; the sequence is DPMHEIEDKST. Residues Ser43 and Ser54 each carry the phosphoserine modification. Over residues 53–70 the composition is skewed to low complexity; that stretch reads NSRSSSNSSVTSTGQSSR. The segment covering 71–82 has biased composition (basic residues); the sequence is RVTKKTTKKKKK. The AN1-type zinc finger occupies 79 to 128; sequence KKKKNACYFDTCSSAASKFIGDCNFCKGHFCSKHRLMENHACNGLTSCKE. Positions 85, 90, 101, 104, 109, 112, 118, and 120 each coordinate Zn(2+).

The protein resides in the nucleus. Functionally, may have a role in protecting cells from metalloid-induced proteotoxicity. The protein is AN1-type zinc finger protein TMC1 of Saccharomyces cerevisiae (strain ATCC 204508 / S288c) (Baker's yeast).